Reading from the N-terminus, the 460-residue chain is Glycine--tRNA ligase (460 aa).

Substrate is bound by residues R98 and E172. Residues R204 to E206, F214 to F219, E288 to L289, and G332 to R335 each bind ATP. F219–E223 provides a ligand contact to substrate. E328–G332 contributes to the substrate binding site.

It belongs to the class-II aminoacyl-tRNA synthetase family. Homodimer.

It is found in the cytoplasm. The catalysed reaction is tRNA(Gly) + glycine + ATP = glycyl-tRNA(Gly) + AMP + diphosphate. Its function is as follows. Catalyzes the attachment of glycine to tRNA(Gly). The chain is Glycine--tRNA ligase from Geobacillus kaustophilus (strain HTA426).